The following is a 71-amino-acid chain: Translation initiation factor IF-1 (71 aa).

Positions 1-71 (MSKDDLIQFT…LTKGRVIHRH (71 aa)) constitute an S1-like domain.

The protein belongs to the IF-1 family. As to quaternary structure, component of the 30S ribosomal translation pre-initiation complex which assembles on the 30S ribosome in the order IF-2 and IF-3, IF-1 and N-formylmethionyl-tRNA(fMet); mRNA recruitment can occur at any time during PIC assembly.

It localises to the cytoplasm. In terms of biological role, one of the essential components for the initiation of protein synthesis. Stabilizes the binding of IF-2 and IF-3 on the 30S subunit to which N-formylmethionyl-tRNA(fMet) subsequently binds. Helps modulate mRNA selection, yielding the 30S pre-initiation complex (PIC). Upon addition of the 50S ribosomal subunit IF-1, IF-2 and IF-3 are released leaving the mature 70S translation initiation complex. The sequence is that of Translation initiation factor IF-1 from Rickettsia conorii (strain ATCC VR-613 / Malish 7).